Consider the following 92-residue polypeptide: DNA-binding protein HU 1 (92 aa).

Threonine 4 is modified (phosphothreonine).

Belongs to the bacterial histone-like protein family. As to quaternary structure, homodimer. In terms of assembly, (Microbial infection) Interacts with Bacillus phage SP01 Gp46; the interaction replaces dsDNA from the hbs-DNA complex.

The protein resides in the cytoplasm. Its subcellular location is the nucleoid. Functionally, histone-like DNA-binding protein which introduces negative supercoils in relaxed plasmid DNA in the presence of topoisomerase I. There are at least 20,000 monomers/cell. Capable of wrapping DNA to stabilize it, and thus to prevent its denaturation under extreme environmental conditions. Binds evenly across chromosome, does not display a preference for AT content. Binds ss- and dsDNA in a sequence non-specific manner; 8 nucleotides are sufficient to bind protein. The protein is DNA-binding protein HU 1 of Bacillus subtilis (strain 168).